Reading from the N-terminus, the 379-residue chain is Succinyl-diaminopimelate desuccinylase (379 aa).

Position 70 (H70) interacts with Zn(2+). Residue D72 is part of the active site. Position 103 (D103) interacts with Zn(2+). Residue E137 is the Proton acceptor of the active site. The Zn(2+) site is built by E138, E166, and H352.

The protein belongs to the peptidase M20A family. DapE subfamily. As to quaternary structure, homodimer. The cofactor is Zn(2+). Co(2+) serves as cofactor.

The enzyme catalyses N-succinyl-(2S,6S)-2,6-diaminopimelate + H2O = (2S,6S)-2,6-diaminopimelate + succinate. It functions in the pathway amino-acid biosynthesis; L-lysine biosynthesis via DAP pathway; LL-2,6-diaminopimelate from (S)-tetrahydrodipicolinate (succinylase route): step 3/3. Functionally, catalyzes the hydrolysis of N-succinyl-L,L-diaminopimelic acid (SDAP), forming succinate and LL-2,6-diaminopimelate (DAP), an intermediate involved in the bacterial biosynthesis of lysine and meso-diaminopimelic acid, an essential component of bacterial cell walls. In Shewanella baltica (strain OS155 / ATCC BAA-1091), this protein is Succinyl-diaminopimelate desuccinylase.